We begin with the raw amino-acid sequence, 333 residues long: Beta-ketoacyl-[acyl-carrier-protein] synthase III (333 aa).

Residues C122 and H258 contribute to the active site. The ACP-binding stretch occupies residues 259–263 (QANER). The active site involves N289.

The protein belongs to the thiolase-like superfamily. FabH family. As to quaternary structure, homodimer.

The protein resides in the cytoplasm. The enzyme catalyses butanoyl-CoA + malonyl-[ACP] + H(+) = 3-oxohexanoyl-[ACP] + CO2 + CoA. It carries out the reaction malonyl-[ACP] + acetyl-CoA + H(+) = 3-oxobutanoyl-[ACP] + CO2 + CoA. The catalysed reaction is 2-methylpropanoyl-CoA + malonyl-[ACP] + H(+) = 4-methyl-3-oxopentanoyl-[ACP] + CO2 + CoA. It functions in the pathway lipid metabolism; fatty acid biosynthesis. Its activity is regulated as follows. Inhibited by thiolactomycin. Its function is as follows. Catalyzes the condensation reaction of fatty acid synthesis by the addition to an acyl acceptor of two carbons from malonyl-ACP. Catalyzes the first condensation reaction which initiates fatty acid synthesis and may therefore play a role in governing the total rate of fatty acid production. Possesses both acetoacetyl-ACP synthase and acetyl transacylase activities. Utilizes both straight and branched-chain acyl-CoAs. The order of reactivity with the various acyl-CoA substrates at saturation is butanoyl-CoA &gt; acetyl-CoA &gt; 2-methylpropanoyl-CoA (or isobutyryl-CoA). Not involved in tetracenomycin C (TCM C) biosynthesis. The protein is Beta-ketoacyl-[acyl-carrier-protein] synthase III (fabH) of Streptomyces glaucescens.